Consider the following 152-residue polypeptide: Deoxyuridine 5'-triphosphate nucleotidohydrolase (152 aa).

Residues 71–73 (RSG), Asn-84, 88–90 (LID), and Met-98 each bind substrate.

Belongs to the dUTPase family. Requires Mg(2+) as cofactor.

The catalysed reaction is dUTP + H2O = dUMP + diphosphate + H(+). Its pathway is pyrimidine metabolism; dUMP biosynthesis; dUMP from dCTP (dUTP route): step 2/2. In terms of biological role, this enzyme is involved in nucleotide metabolism: it produces dUMP, the immediate precursor of thymidine nucleotides and it decreases the intracellular concentration of dUTP so that uracil cannot be incorporated into DNA. This Hahella chejuensis (strain KCTC 2396) protein is Deoxyuridine 5'-triphosphate nucleotidohydrolase.